We begin with the raw amino-acid sequence, 49 residues long: Defensin Tm-AMP-D1.2 (49 aa).

Intrachain disulfides connect Cys3/Cys49, Cys14/Cys34, Cys20/Cys43, and Cys24/Cys45.

In terms of biological role, plant defense peptide. The chain is Defensin Tm-AMP-D1.2 from Triticum monococcum (Einkorn wheat).